The primary structure comprises 1428 residues: DNA-directed RNA polymerase subunit beta' (1428 aa).

4 residues coordinate Zn(2+): cysteine 66, cysteine 68, cysteine 81, and cysteine 84. Mg(2+) contacts are provided by aspartate 472, aspartate 474, and aspartate 476. Cysteine 816, cysteine 890, cysteine 897, and cysteine 900 together coordinate Zn(2+).

The protein belongs to the RNA polymerase beta' chain family. The RNAP catalytic core consists of 2 alpha, 1 beta, 1 beta' and 1 omega subunit. When a sigma factor is associated with the core the holoenzyme is formed, which can initiate transcription. It depends on Mg(2+) as a cofactor. Zn(2+) serves as cofactor.

It carries out the reaction RNA(n) + a ribonucleoside 5'-triphosphate = RNA(n+1) + diphosphate. DNA-dependent RNA polymerase catalyzes the transcription of DNA into RNA using the four ribonucleoside triphosphates as substrates. The protein is DNA-directed RNA polymerase subunit beta' of Phocaeicola vulgatus (strain ATCC 8482 / DSM 1447 / JCM 5826 / CCUG 4940 / NBRC 14291 / NCTC 11154) (Bacteroides vulgatus).